The chain runs to 444 residues: Adenylosuccinate synthetase (444 aa).

GTP is bound by residues 13–19 (GDEGKGK) and 41–43 (GHT). Aspartate 14 acts as the Proton acceptor in catalysis. Mg(2+) contacts are provided by aspartate 14 and glycine 41. IMP is bound by residues 14 to 17 (DEGK), 39 to 42 (NAGH), threonine 129, arginine 143, glutamine 224, threonine 239, and arginine 303. The Proton donor role is filled by histidine 42. 299–305 (TTTGRRR) contacts substrate. Residues arginine 305, 331–333 (KLD), and 413–415 (SLG) contribute to the GTP site.

It belongs to the adenylosuccinate synthetase family. As to quaternary structure, homodimer. The cofactor is Mg(2+).

It is found in the cytoplasm. It catalyses the reaction IMP + L-aspartate + GTP = N(6)-(1,2-dicarboxyethyl)-AMP + GDP + phosphate + 2 H(+). It participates in purine metabolism; AMP biosynthesis via de novo pathway; AMP from IMP: step 1/2. Plays an important role in the de novo pathway of purine nucleotide biosynthesis. Catalyzes the first committed step in the biosynthesis of AMP from IMP. This is Adenylosuccinate synthetase from Synechocystis sp. (strain ATCC 27184 / PCC 6803 / Kazusa).